A 379-amino-acid polypeptide reads, in one-letter code: GPN-loop GTPase QQT2 (379 aa).

Methionine 1 carries the post-translational modification N-acetylmethionine. A GTP-binding site is contributed by 51-56; that stretch reads GSGKTS. Residues 108 to 110 carry the Gly-Pro-Asn (GPN)-loop; involved in dimer interface motif; it reads GPN. Residues 211–214 and alanine 267 contribute to the GTP site; that span reads NKTD. A coiled-coil region spans residues 288–322; that stretch reads METYKADLDMRKADKERLEEERKKHEMEKLRKDME. Composition is skewed to basic and acidic residues over residues 303 to 322 and 335 to 346; these read ERLE…KDME and LKDRDATEKMML. The segment at 303–379 is disordered; that stretch reads ERLEEERKKH…EDDETKHYYL (77 aa). Residues 347–372 show a composition bias toward acidic residues; that stretch reads EEDDEDFQVEDEEDSDDAIDEDDEDD.

Belongs to the GPN-loop GTPase family. Heterodimer with QQT1. In terms of tissue distribution, expressed in individual cells of roots, leaves and flowers.

The protein localises to the cytoplasm. The protein resides in the nucleus. It localises to the cytoskeleton. It is found in the spindle. Its subcellular location is the phragmoplast. Small GTPase that is essential for the correct formation of the tangential divisions in early embryos. Associates with microtubule during mitosis and may function in the positioning of the division plane. May participate in the patterning of the early embryo at the octant-dermatogen transition. This Arabidopsis thaliana (Mouse-ear cress) protein is GPN-loop GTPase QQT2.